We begin with the raw amino-acid sequence, 298 residues long: Probable phosphite transport system-binding protein HtxB (298 aa).

A signal peptide spans 1–33; sequence MQVFTLFSKFKKALTRAILAFIATIIVCTPAQA.

This sequence belongs to the phosphate/phosphite/phosphonate binding protein family.

Functionally, probably forms part of a binding-protein-dependent hypophosphite transporter. The chain is Probable phosphite transport system-binding protein HtxB (htxB) from Stutzerimonas stutzeri (Pseudomonas stutzeri).